A 650-amino-acid chain; its full sequence is Pentatricopeptide repeat-containing protein At1g51965, mitochondrial (650 aa).

The N-terminal 23 residues, 1 to 23, are a transit peptide targeting the mitochondrion; the sequence is MKLLRRRFFNSVNTITRPNRRHY. 14 PPR repeats span residues 132-169, 170-200, 202-236, 237-267, 269-303, 304-338, 339-369, 371-405, 406-440, 441-475, 476-510, 511-545, 546-580, and 581-615; these read DPFLYNRIILILSRSNLPDRFDRVRSILDSMVKSNVHG, NISTVNILIGFFGNTEDLQMCLRLVKKWDLK, NSFTYKCLLQAYLRSRDYSKAFDVYCEIRRGGHKL, DIFAYNMLLDALAKDEKACQVFEDMKKRHCR, DEYTYTIMIRTMGRIGKCDEAVGLFNEMITEGLTL, NVVGYNTLMQVLAKGKMVDKAIQVFSRMVETGCRP, NEYTYSLLLNLLVAEGQLVRLDGVVEISKRY, TQGIYSYLVRTLSKLGHVSEAHRLFCDMWSFPVKG, ERDSYMSMLESLCGAGKTIEAIEMLSKIHEKGVVT, DTMMYNTVFSALGKLKQISHIHDLFEKMKKDGPSP, DIFTYNILIASFGRVGEVDEAINIFEELERSDCKP, DIISYNSLINCLGKNGDVDEAHVRFKEMQEKGLNP, DVVTYSTLMECFGKTERVEMAYSLFEEMLVKGCQP, and NIVTYNILLDCLEKNGRTAEAVDLYSKMKQQGLTP.

It belongs to the PPR family. P subfamily.

It localises to the mitochondrion. The sequence is that of Pentatricopeptide repeat-containing protein At1g51965, mitochondrial from Arabidopsis thaliana (Mouse-ear cress).